The primary structure comprises 457 residues: Senescence-associated protein OSA15, chloroplastic (457 aa).

A chloroplast-targeting transit peptide spans 1 to 57 (MATRIPGTVAASGVYYNDQYRMPCKLKGIHCMALNCIPQKAKVRKCMNGYQSTFRFC).

Belongs to the ATA15/OSA15 family. In terms of tissue distribution, expressed in leaves (at protein level).

It localises to the plastid. The protein localises to the chloroplast. Its function is as follows. May be involved in the regulation of leaf senescence. The polypeptide is Senescence-associated protein OSA15, chloroplastic (Oryza sativa subsp. japonica (Rice)).